We begin with the raw amino-acid sequence, 451 residues long: Probable M18 family aminopeptidase 1 (451 aa).

Zn(2+)-binding residues include H93, H168, and H426.

This sequence belongs to the peptidase M18 family. Zn(2+) serves as cofactor.

The protein is Probable M18 family aminopeptidase 1 (apeA) of Thermotoga maritima (strain ATCC 43589 / DSM 3109 / JCM 10099 / NBRC 100826 / MSB8).